The primary structure comprises 507 residues: MNVLFIFSLLFLAALESCADDRRSPLEKCFQEADYEDFLEIARNGLKETSNPKHVVVVGAGMAGLSAAYVLAGAGHKVTLLEASERVGGRVITYHNDREGWYVNMGPMRLPERHRIVREYIRKFGLKLNEFFQENENAWYYINNIRKRVWEVKKDPSLLKYPVKPSEEGKSASQLYQESLRKVIEELKRTNCSYILNKYDSYSTKEYLIKEGNLSRGAVDMIGDLLNEDSSYHLSFMESLKSDALFSYEKRFDEIVGGFDQLPISMYQAIAEMVHLNARVIKIQYDAEKVRVTYQTPAKTFVTADYVIVCSTSRAARRIYFEPPLPPKKAHALRSIHYRSATKIFLTCSKKFWEADGIHGGKSTTDLPSRFIHYPNHNFTSGIGVIMAYVLADDSDFFQALDTKTCADIVINDLSLIHDLPKREIQALCYPSIKKWNLDKYTMGSITSFTPYQFQDYFESAAAPVGRIHFAGEYTGRFHGWIDSTIMTGLRAARDVNRASQKPSKIR.

The first 19 residues, 1-19, serve as a signal peptide directing secretion; the sequence is MNVLFIFSLLFLAALESCA. Cys29 and Cys192 form a disulfide bridge. FAD contacts are provided by residues 62–63, 82–83, Arg90, and 106–109; these read MA, EA, and GPMR. Arg109 provides a ligand contact to substrate. Residues Asn191 and Asn213 are each glycosylated (N-linked (GlcNAc...) asparagine). Residue Val280 coordinates FAD. Cys348 and Cys429 form a disulfide bridge. N-linked (GlcNAc...) asparagine glycosylation occurs at Asn378. Substrate is bound at residue Tyr389. FAD contacts are provided by residues Glu473 and 480 to 485; that span reads GWIDST.

The protein belongs to the flavin monoamine oxidase family. FIG1 subfamily. In terms of assembly, homodimer; non-covalently linked. The cofactor is FAD. As to expression, expressed by the venom gland.

It is found in the secreted. The catalysed reaction is an L-alpha-amino acid + O2 + H2O = a 2-oxocarboxylate + H2O2 + NH4(+). It catalyses the reaction L-leucine + O2 + H2O = 4-methyl-2-oxopentanoate + H2O2 + NH4(+). Functionally, catalyzes an oxidative deamination of predominantly hydrophobic and aromatic L-amino acids, thus producing hydrogen peroxide that may contribute to the diverse toxic effects of this enzyme. Shows activity on L-Leu. Exhibits diverse biological activities, such as hemorrhage, hemolysis, edema, apoptosis of vascular endothelial cells or tumor cell lines, antibacterial and antiparasitic activities. This protein induces platelet aggregation by both hydrogen peroxide production and binding to platelet membrane proteins (that would enhance the sensitivity of platelets to hydrogen peroxide). Effects of snake L-amino oxidases on platelets are controversial, since they either induce aggregation or inhibit agonist-induced aggregation. These different effects are probably due to different experimental conditions. This chain is L-amino-acid oxidase, found in Naja atra (Chinese cobra).